A 149-amino-acid polypeptide reads, in one-letter code: uncharacterized protein (149 aa).

A Phosphoserine modification is found at serine 21. 2 helical membrane passes run 48 to 68 (FMEFAVGSIVYSFGVPGWVLG) and 72 to 92 (VLAAGFLVMFLFLVWPCFQLV). Positions 116–149 (AEEVPPPSYPSLEEENEGNEEIEESEEMNTLLSK) are disordered. Residues 127–142 (LEEENEGNEEIEESEE) show a composition bias toward acidic residues.

It is found in the membrane. This is an uncharacterized protein from Schizosaccharomyces pombe (strain 972 / ATCC 24843) (Fission yeast).